We begin with the raw amino-acid sequence, 811 residues long: RFX-like DNA-binding protein RFX1 (811 aa).

Disordered regions lie at residues 48 to 92 (EPTS…TYLP) and 111 to 156 (LLHQ…QRQP). Residues 51-70 (SRGSNDNSNGPSNGSSVNSN) show a composition bias toward low complexity. A compositionally biased stretch (pro residues) spans 140–149 (SPTPTQPPAQ). S173 is modified (phosphoserine). The segment at 181-222 (KSEETLNNNPPTAAKRTNTFPSIPSSTKKQKTSQEKRISSIS) is disordered. Over residues 185–204 (TLNNNPPTAAKRTNTFPSIP) the composition is skewed to polar residues. The RFX-type winged-helix DNA-binding region spans 285 to 360 (ALLWLMKNCK…YHYCGLKLTV (76 aa)). The span at 377-391 (LVHNNDPISPLSSPS) shows a compositional bias: low complexity. Positions 377–461 (LVHNNDPISP…AANNPTGTLS (85 aa)) are disordered. Residues 409–428 (NRKSLSRTGSPVKQSSNDNP) are compositionally biased toward polar residues. A compositionally biased stretch (basic and acidic residues) spans 434–445 (ESQHPNETEANK).

The protein belongs to the RFX family.

The chain is RFX-like DNA-binding protein RFX1 (RFX1) from Saccharomyces cerevisiae (strain ATCC 204508 / S288c) (Baker's yeast).